Here is a 379-residue protein sequence, read N- to C-terminus: Dual-specificity RNA methyltransferase RlmN (379 aa).

Residue Glu95 is the Proton acceptor of the active site. The Radical SAM core domain occupies 101-345 (EETRGTLCVS…TTVRKTRGDD (245 aa)). Cysteines 108 and 350 form a disulfide. The [4Fe-4S] cluster site is built by Cys115, Cys119, and Cys122. S-adenosyl-L-methionine-binding positions include 176 to 177 (GE), Ser208, 230 to 232 (SLH), and Asn307. Cys350 serves as the catalytic S-methylcysteine intermediate.

It belongs to the radical SAM superfamily. RlmN family. It depends on [4Fe-4S] cluster as a cofactor.

It localises to the cytoplasm. The enzyme catalyses adenosine(2503) in 23S rRNA + 2 reduced [2Fe-2S]-[ferredoxin] + 2 S-adenosyl-L-methionine = 2-methyladenosine(2503) in 23S rRNA + 5'-deoxyadenosine + L-methionine + 2 oxidized [2Fe-2S]-[ferredoxin] + S-adenosyl-L-homocysteine. It catalyses the reaction adenosine(37) in tRNA + 2 reduced [2Fe-2S]-[ferredoxin] + 2 S-adenosyl-L-methionine = 2-methyladenosine(37) in tRNA + 5'-deoxyadenosine + L-methionine + 2 oxidized [2Fe-2S]-[ferredoxin] + S-adenosyl-L-homocysteine. Its function is as follows. Specifically methylates position 2 of adenine 2503 in 23S rRNA and position 2 of adenine 37 in tRNAs. m2A2503 modification seems to play a crucial role in the proofreading step occurring at the peptidyl transferase center and thus would serve to optimize ribosomal fidelity. This chain is Dual-specificity RNA methyltransferase RlmN, found in Burkholderia lata (strain ATCC 17760 / DSM 23089 / LMG 22485 / NCIMB 9086 / R18194 / 383).